Consider the following 400-residue polypeptide: Probable tRNA pseudouridine synthase D (400 aa).

Aspartate 89 (nucleophile) is an active-site residue. A TRUD domain is found at 162–357; the sequence is GVPNYYGLQR…AGGDRKPALL (196 aa).

This sequence belongs to the pseudouridine synthase TruD family.

It carries out the reaction uridine(13) in tRNA = pseudouridine(13) in tRNA. In terms of biological role, could be responsible for synthesis of pseudouridine from uracil-13 in transfer RNAs. This Methanopyrus kandleri (strain AV19 / DSM 6324 / JCM 9639 / NBRC 100938) protein is Probable tRNA pseudouridine synthase D.